The following is a 475-amino-acid chain: Glycogen synthase (475 aa).

Lys15 lines the ADP-alpha-D-glucose pocket.

The protein belongs to the glycosyltransferase 1 family. Bacterial/plant glycogen synthase subfamily.

It carries out the reaction [(1-&gt;4)-alpha-D-glucosyl](n) + ADP-alpha-D-glucose = [(1-&gt;4)-alpha-D-glucosyl](n+1) + ADP + H(+). It participates in glycan biosynthesis; glycogen biosynthesis. Functionally, synthesizes alpha-1,4-glucan chains using ADP-glucose. This Anaeromyxobacter sp. (strain K) protein is Glycogen synthase.